Here is a 253-residue protein sequence, read N- to C-terminus: E3 ubiquitin-protein ligase MARCHF3 (253 aa).

An RING-CH-type zinc finger spans residues 63 to 123 (SPFNDRPMCR…ELCHFRFAVE (61 aa)). Zn(2+) contacts are provided by C71, C74, C87, C89, H97, C100, C113, and C116. A run of 2 helical transmembrane segments spans residues 145–165 (LFGDMVCFLFITPLATISGWL) and 182–202 (AVGLIALTVALFTIYLFWTLV). S237 and S243 each carry phosphoserine.

As to quaternary structure, interacts with MARCHF2 and STX6.

It localises to the cytoplasmic vesicle membrane. The protein resides in the early endosome membrane. The enzyme catalyses S-ubiquitinyl-[E2 ubiquitin-conjugating enzyme]-L-cysteine + [acceptor protein]-L-lysine = [E2 ubiquitin-conjugating enzyme]-L-cysteine + N(6)-ubiquitinyl-[acceptor protein]-L-lysine.. The protein operates within protein modification; protein ubiquitination. In terms of biological role, E3 ubiquitin-protein ligase which may be involved in endosomal trafficking. E3 ubiquitin ligases accept ubiquitin from an E2 ubiquitin-conjugating enzyme in the form of a thioester and then directly transfer the ubiquitin to targeted substrates. The chain is E3 ubiquitin-protein ligase MARCHF3 from Homo sapiens (Human).